A 483-amino-acid chain; its full sequence is Shaker-related potassium channel tsha2 (483 aa).

The Cytoplasmic segment spans residues 1–165; the sequence is MTVVSCEIQD…YPESSGPARM (165 aa). Residues 166–186 traverse the membrane as a helical segment; that stretch reads IAVVSVSVIVISIVIFCLETL. Over 187–220 the chain is Extracellular; it reads PQFREDTSANLPLSNHHTTNGTTLHKKPNLFTDP. A helical transmembrane segment spans residues 221-241; sequence FFMVETLCIVWFSFEFLVRFL. Residues 242 to 252 lie on the Cytoplasmic side of the membrane; that stretch reads SCPSKPAFFKN. The S-palmitoyl cysteine moiety is linked to residue C243. The chain crosses the membrane as a helical span at residues 253–273; it reads AMNSIDILAIAPYFITLGLEL. Residues 274-324 are Extracellular-facing; that stretch reads AEQQEAGSEQAMSLAILRVIRLVRVFRIFKLSRHSKGLQILGQTLHASISE. The helical; Voltage-sensor transmembrane segment at 325–345 threads the bilayer; the sequence is LGLLIFFLLIGVILFSSAVYF. The Cytoplasmic portion of the chain corresponds to 346–353; it reads AEADDPES. A helical transmembrane segment spans residues 354–374; it reads GFSSIPAAFWWAVVSMTTVGY. The short motif at 371 to 376 is the Selectivity filter element; it reads TVGYGD. The Extracellular segment spans residues 375–385; the sequence is GDMCPVTIGGK. A helical membrane pass occupies residues 386–406; it reads IVGSMCAIAGVLTIALPVPVI. Residues 407–483 are Cytoplasmic-facing; the sequence is VSNFNYFYHR…EHYTGKLTDV (77 aa). Y426 carries the post-translational modification Phosphotyrosine. A Phosphothreonine modification is found at T430. Polar residues predominate over residues 440 to 452; sequence EFKSTSDSRQSLT. The segment at 440–459 is disordered; the sequence is EFKSTSDSRQSLTKSEDTEE. Positions 481–483 match the PDZ-binding motif; the sequence is TDV.

The protein belongs to the potassium channel family. A (Shaker) (TC 1.A.1.2) subfamily. Heterotetramer of potassium channel proteins. Binds PDZ domains of dlg1, dlg2 and dlg4. Expressed in oligodendrocytes and astrocytes.

Its subcellular location is the membrane. In terms of biological role, mediates the voltage-dependent potassium ion permeability of excitable membranes. Assuming opened or closed conformations in response to the voltage difference across the membrane, the protein forms a potassium-selective channel through which potassium ions may pass in accordance with their electrochemical gradient. This Oncorhynchus mykiss (Rainbow trout) protein is Shaker-related potassium channel tsha2.